The sequence spans 453 residues: GTPase Der (453 aa).

EngA-type G domains follow at residues 4–169 (PVVA…PPTD) and 178–353 (INVA…EQHR). GTP contacts are provided by residues 10–17 (GRPNVGKS), 57–61 (DTGGL), 120–123 (NKCE), 184–191 (GRPNVGKS), 231–235 (DTAGI), and 296–299 (NKWD). The 86-residue stretch at 354–439 (RRVSTSVINE…PIRLLWRGKK (86 aa)) folds into the KH-like domain.

It belongs to the TRAFAC class TrmE-Era-EngA-EngB-Septin-like GTPase superfamily. EngA (Der) GTPase family. As to quaternary structure, associates with the 50S ribosomal subunit.

Its function is as follows. GTPase that plays an essential role in the late steps of ribosome biogenesis. The protein is GTPase Der of Cyanothece sp. (strain PCC 7425 / ATCC 29141).